A 92-amino-acid chain; its full sequence is Kinetoplastid membrane protein 11C (92 aa).

The protein belongs to the KMP-11 family. As to quaternary structure, monomer.

It is found in the cytoplasm. Its subcellular location is the cytoskeleton. The protein localises to the cell projection. The protein resides in the cilium. It localises to the flagellum. Its function is as follows. May be involved in the regulation of the cytoskeleton through interaction with the subpellicular microtubules. May be involved in parasite mobility and attachment to the surface of the host cell. Behaves as a strong immunogen during infection. In Leishmania infantum, this protein is Kinetoplastid membrane protein 11C (KMP-11C).